A 276-amino-acid chain; its full sequence is UPF0276 protein Caul_0757 (276 aa).

The protein belongs to the UPF0276 family.

The protein is UPF0276 protein Caul_0757 of Caulobacter sp. (strain K31).